Here is a 93-residue protein sequence, read N- to C-terminus: DNA/RNA-binding protein Alba 2 (93 aa).

It belongs to the histone-like Alba family.

The protein resides in the cytoplasm. It localises to the chromosome. Its function is as follows. Binds double-stranded DNA tightly but without sequence specificity. Involved in DNA compaction. The chain is DNA/RNA-binding protein Alba 2 from Methanopyrus kandleri (strain AV19 / DSM 6324 / JCM 9639 / NBRC 100938).